Here is a 105-residue protein sequence, read N- to C-terminus: Diuretic hormone class 2 (105 aa).

An N-terminal signal peptide occupies residues 1–23; sequence MTVLCTLMAFVMVVAISSLTVDA. Positions 24–63 are excised as a propeptide; that stretch reads IPHSHESYWDQQDDIDRDEFLELLSRLSRTVMNRPEMENS. Pro-96 carries the proline amide modification. Positions 101–105 are excised as a propeptide; that stretch reads RSEQA.

Expressed in central brain, antennal lobes, retrocerebral complex and gnathal, thoracic and abdominal ganglia but not in optical lobes (at protein level).

It localises to the secreted. In terms of biological role, regulation of fluid secretion. Stimulates Malpighian tubules fluid secretion. This Camponotus floridanus (Florida carpenter ant) protein is Diuretic hormone class 2.